Consider the following 254-residue polypeptide: Small ribosomal subunit protein uS3 (254 aa).

The KH type-2 domain occupies 39–109 (IRNYISARLK…EVKIDVIEVI (71 aa)). The disordered stretch occupies residues 220–254 (EEMKKMQERRNDSRGRGRGDGRGAKRRRRPAAKKA). Residues 221-242 (EMKKMQERRNDSRGRGRGDGRG) are compositionally biased toward basic and acidic residues. A compositionally biased stretch (basic residues) spans 243–254 (AKRRRRPAAKKA).

The protein belongs to the universal ribosomal protein uS3 family. Part of the 30S ribosomal subunit. Forms a tight complex with proteins S10 and S14.

Its function is as follows. Binds the lower part of the 30S subunit head. Binds mRNA in the 70S ribosome, positioning it for translation. This Chlorobaculum parvum (strain DSM 263 / NCIMB 8327) (Chlorobium vibrioforme subsp. thiosulfatophilum) protein is Small ribosomal subunit protein uS3.